A 438-amino-acid chain; its full sequence is MRISIFGLGYVGAVCAGCLSARGHEVVGVDISSTKIDLINNGKSPIVEPGLEELLQKGISTGKLRGTTDFAEAIRATDLSMICVGTPSKKNGDLELDYIESVCREIGYVLRDKATRHTIVVRSTVLPGTVANVVIPILEDCSGKKAGVDFGVAVNPEFLRESTAIKDYDLPPMTVIGEFDKASGDVLQSLYEELDAPIIRKDIAVAEMIKYTCNVWHATKVTFANEIGNIAKAVGVDGREVMDVVCQDKALNLSQYYMRPGFAFGGSCLPKDVRALTYRAGSLDVEAPLLNSLMRSNTSQVQNAFDMVASYDARKVALLGLSFKAGTDDLRESPLVELAEMLIGKGFDLSIFDSNVEYARVHGANKDYIESKIPHVSSLLNSDFDQVINDSDVIILGNRDERFRALANKTPEGKRVIDLVGFMANATSEDGRAEGICW.

6 residues coordinate NAD(+): tyrosine 10, valine 11, aspartate 30, lysine 35, threonine 86, and threonine 124. Glutamate 161, lysine 210, asparagine 214, histidine 217, asparagine 225, tyrosine 256, tyrosine 257, arginine 259, phenylalanine 262, and glycine 265 together coordinate GDP-alpha-D-mannuronate. Cysteine 268 is a catalytic residue. Lysine 271 serves as a coordination point for NAD(+). Lysine 324 contributes to the GDP-alpha-D-mannuronate binding site. Arginine 331 contributes to the NAD(+) binding site.

It belongs to the UDP-glucose/GDP-mannose dehydrogenase family.

The enzyme catalyses GDP-alpha-D-mannose + 2 NAD(+) + H2O = GDP-alpha-D-mannuronate + 2 NADH + 3 H(+). Its pathway is glycan biosynthesis; alginate biosynthesis. Catalyzes the oxidation of guanosine diphospho-D-mannose (GDP-D-mannose) to GDP-D-mannuronic acid, a precursor for alginate polymerization. The alginate layer causes a mucoid phenotype and provides a protective barrier against host immune defenses and antibiotics. The polypeptide is GDP-mannose 6-dehydrogenase (algD) (Pseudomonas syringae pv. syringae).